The primary structure comprises 325 residues: Glutarate 2-hydroxylase (325 aa).

Fe cation is bound by residues H160, D162, and H292.

Belongs to the glutarate hydroxylase family. Homotetramer. Fe(2+) is required as a cofactor.

It carries out the reaction glutarate + 2-oxoglutarate + O2 = (S)-2-hydroxyglutarate + succinate + CO2. Its pathway is amino-acid degradation. Acts as an alpha-ketoglutarate-dependent dioxygenase catalyzing hydroxylation of glutarate (GA) to L-2-hydroxyglutarate (L2HG). Functions in a L-lysine degradation pathway that proceeds via cadaverine, glutarate and L-2-hydroxyglutarate. This is Glutarate 2-hydroxylase from Escherichia coli O7:K1 (strain IAI39 / ExPEC).